A 139-amino-acid polypeptide reads, in one-letter code: Holo-[acyl-carrier-protein] synthase (139 aa).

Residues Asp-8 and Glu-61 each coordinate Mg(2+).

Belongs to the P-Pant transferase superfamily. AcpS family. Mg(2+) serves as cofactor.

It is found in the cytoplasm. It carries out the reaction apo-[ACP] + CoA = holo-[ACP] + adenosine 3',5'-bisphosphate + H(+). Transfers the 4'-phosphopantetheine moiety from coenzyme A to a Ser of acyl-carrier-protein. This Bradyrhizobium diazoefficiens (strain JCM 10833 / BCRC 13528 / IAM 13628 / NBRC 14792 / USDA 110) protein is Holo-[acyl-carrier-protein] synthase.